A 209-amino-acid chain; its full sequence is MKILIASSHGYKVRETKVFLKKLGEFDIFSLVDYPSYHPPKETGETPEENAIQKGLFAAQTFRCWTIADDSMLIIPALGGLPGKLSASFAGEQANDKDHRKKLLENMRLLENTIDRSAYFECCVALISPFGKIFKAHASCEGTIAFEERGSSGFGYDPLFVKHDYKQTYAELPEAIKNQVSHRAKALVKLQPYVETVLANHLLAGKESL.

Position 7-12 (Ser7–Lys12) interacts with substrate. The Proton acceptor role is filled by Asp70. A Mg(2+)-binding site is contributed by Asp70. Residues Ser71, Phe154–Asp157, Lys177, and His182–Arg183 each bind substrate.

Belongs to the HAM1 NTPase family. As to quaternary structure, homodimer. The cofactor is Mg(2+).

The enzyme catalyses XTP + H2O = XMP + diphosphate + H(+). It catalyses the reaction dITP + H2O = dIMP + diphosphate + H(+). The catalysed reaction is ITP + H2O = IMP + diphosphate + H(+). Its function is as follows. Pyrophosphatase that catalyzes the hydrolysis of nucleoside triphosphates to their monophosphate derivatives, with a high preference for the non-canonical purine nucleotides XTP (xanthosine triphosphate), dITP (deoxyinosine triphosphate) and ITP. Seems to function as a house-cleaning enzyme that removes non-canonical purine nucleotides from the nucleotide pool, thus preventing their incorporation into DNA/RNA and avoiding chromosomal lesions. This chain is dITP/XTP pyrophosphatase, found in Chlamydia trachomatis serovar A (strain ATCC VR-571B / DSM 19440 / HAR-13).